A 513-amino-acid chain; its full sequence is uncharacterized protein (513 aa).

Belongs to the NodU/CmcH family.

This is an uncharacterized protein from Methanocaldococcus jannaschii (strain ATCC 43067 / DSM 2661 / JAL-1 / JCM 10045 / NBRC 100440) (Methanococcus jannaschii).